The primary structure comprises 357 residues: Arginine kinase (357 aa).

The region spanning Lys-9–Gly-91 is the Phosphagen kinase N-terminal domain. Gly-64 to Tyr-68 provides a ligand contact to substrate. A Phosphagen kinase C-terminal domain is found at Phe-119–Ala-356. ATP contacts are provided by residues Ser-122–Arg-126 and His-185. Glu-225 contributes to the substrate binding site. Residue Arg-229 coordinates ATP. Cys-271 lines the substrate pocket. ATP contacts are provided by residues Arg-280 to His-284 and Arg-309 to Glu-314. Glu-314 is a binding site for substrate.

This sequence belongs to the ATP:guanido phosphotransferase family. As to quaternary structure, monomer.

It localises to the cytoplasm. It carries out the reaction L-arginine + ATP = N(omega)-phospho-L-arginine + ADP + H(+). Functionally, catalyzes the reversible transfer of the terminal phosphoryl group of ATP to L-arginine. This Limulus polyphemus (Atlantic horseshoe crab) protein is Arginine kinase.